A 120-amino-acid chain; its full sequence is MFLLYEYDIFWAFLIISSVIPILAFLISGLLSPIRKGPEKLSSYESGIEPMGDAWLQFRIRYYMFALVFVVFDVETVFLYPWAMSFDVLGVSVFIEALIFVLILIVGLVYAWRKGALEWS.

The next 3 membrane-spanning stretches (helical) occupy residues 9–29, 64–84, and 88–108; these read IFWA…LISG, MFAL…PWAM, and VLGV…IVGL.

It belongs to the complex I subunit 3 family. NDH is composed of at least 16 different subunits, 5 of which are encoded in the nucleus.

It is found in the plastid. It localises to the chloroplast thylakoid membrane. The catalysed reaction is a plastoquinone + NADH + (n+1) H(+)(in) = a plastoquinol + NAD(+) + n H(+)(out). The enzyme catalyses a plastoquinone + NADPH + (n+1) H(+)(in) = a plastoquinol + NADP(+) + n H(+)(out). NDH shuttles electrons from NAD(P)H:plastoquinone, via FMN and iron-sulfur (Fe-S) centers, to quinones in the photosynthetic chain and possibly in a chloroplast respiratory chain. The immediate electron acceptor for the enzyme in this species is believed to be plastoquinone. Couples the redox reaction to proton translocation, and thus conserves the redox energy in a proton gradient. This chain is NAD(P)H-quinone oxidoreductase subunit 3, chloroplastic, found in Populus alba (White poplar).